We begin with the raw amino-acid sequence, 162 residues long: NADH-quinone oxidoreductase subunit I (162 aa).

2 4Fe-4S ferredoxin-type domains span residues 53–83 (LRRYANGEERCIACKLCEAICPAQAITIEAE) and 93–122 (TRYDIDMTKCIYCGYCQEACPVDAIVEGPN). [4Fe-4S] cluster contacts are provided by cysteine 63, cysteine 66, cysteine 69, cysteine 73, cysteine 102, cysteine 105, cysteine 108, and cysteine 112.

This sequence belongs to the complex I 23 kDa subunit family. NDH-1 is composed of 14 different subunits. Subunits NuoA, H, J, K, L, M, N constitute the membrane sector of the complex. [4Fe-4S] cluster serves as cofactor.

Its subcellular location is the cell inner membrane. The catalysed reaction is a quinone + NADH + 5 H(+)(in) = a quinol + NAD(+) + 4 H(+)(out). In terms of biological role, NDH-1 shuttles electrons from NADH, via FMN and iron-sulfur (Fe-S) centers, to quinones in the respiratory chain. The immediate electron acceptor for the enzyme in this species is believed to be ubiquinone. Couples the redox reaction to proton translocation (for every two electrons transferred, four hydrogen ions are translocated across the cytoplasmic membrane), and thus conserves the redox energy in a proton gradient. The polypeptide is NADH-quinone oxidoreductase subunit I (Maricaulis maris (strain MCS10) (Caulobacter maris)).